Consider the following 862-residue polypeptide: Protein translocase subunit SecA (862 aa).

ATP contacts are provided by residues glutamine 88, 106–110 (GEGKT), and aspartate 506. Zn(2+) is bound by residues cysteine 839, cysteine 841, cysteine 850, and histidine 851.

It belongs to the SecA family. Monomer and homodimer. Part of the essential Sec protein translocation apparatus which comprises SecA, SecYEG and auxiliary proteins SecDF-YajC and YidC. It depends on Zn(2+) as a cofactor.

Its subcellular location is the cell inner membrane. It localises to the cytoplasm. The catalysed reaction is ATP + H2O + cellular proteinSide 1 = ADP + phosphate + cellular proteinSide 2.. Functionally, part of the Sec protein translocase complex. Interacts with the SecYEG preprotein conducting channel. Has a central role in coupling the hydrolysis of ATP to the transfer of proteins into and across the cell membrane, serving as an ATP-driven molecular motor driving the stepwise translocation of polypeptide chains across the membrane. The sequence is that of Protein translocase subunit SecA from Campylobacter jejuni subsp. doylei (strain ATCC BAA-1458 / RM4099 / 269.97).